A 915-amino-acid chain; its full sequence is DNA repair-scaffolding protein (915 aa).

Positions 1-15 (MPRGSRARGSKRKRS) are enriched in basic residues. 2 disordered regions span residues 1 to 30 (MPRG…RPLQ) and 56 to 114 (FQNT…EDKT). The span at 56–65 (FQNTSGNPSL) shows a compositional bias: polar residues. Residues 67 to 85 (AEEKTITEKHLELCPRPKQ) are compositionally biased toward basic and acidic residues. The segment covering 86-107 (ETTTSKSTSGLTDITWSSSGSD) has biased composition (polar residues). The tract at residues 151–450 (EISDCASCAS…GTAWTHGHKE (300 aa)) is necessary for interaction with RAD51.

Found in a complex, at least composed of BLM, RAD51 and SPIDR; the complex formation is mediated by SPIDR. Interacts (via C-terminal region) with BLM; the interaction is direct. Interacts with RAD51; the interaction is direct. Interacts (via the C-terminal region) with FIGNL1 (via N-terminal one-half region); the interaction is direct.

It localises to the nucleus. Plays a role in DNA double-strand break (DBS) repair via homologous recombination (HR). Serves as a scaffolding protein that helps to promote the recruitment of DNA-processing enzymes like the helicase BLM and recombinase RAD51 to site of DNA damage, and hence contributes to maintain genomic integrity. This Homo sapiens (Human) protein is DNA repair-scaffolding protein (SPIDR).